A 1157-amino-acid chain; its full sequence is ATP-dependent helicase/deoxyribonuclease subunit B (1157 aa).

A UvrD-like helicase ATP-binding domain is found at 1 to 278 (MTLQIIAGRS…FFLENKRAKT (278 aa)). 8 to 15 (GRSGTGKT) is a binding site for ATP. Residues 272–590 (ENKRAKTESL…VLSDMENAKL (319 aa)) form the UvrD-like helicase C-terminal domain. [4Fe-4S] cluster-binding residues include cysteine 794, cysteine 1115, cysteine 1118, and cysteine 1124.

It belongs to the helicase family. AddB/RexB type 1 subfamily. In terms of assembly, heterodimer of AddA and AddB. Mg(2+) is required as a cofactor. Requires [4Fe-4S] cluster as cofactor.

Its function is as follows. The heterodimer acts as both an ATP-dependent DNA helicase and an ATP-dependent, dual-direction single-stranded exonuclease. Recognizes the chi site generating a DNA molecule suitable for the initiation of homologous recombination. The AddB subunit has 5' -&gt; 3' nuclease activity but not helicase activity. This chain is ATP-dependent helicase/deoxyribonuclease subunit B, found in Listeria monocytogenes serotype 4a (strain HCC23).